We begin with the raw amino-acid sequence, 430 residues long: Protein translocase subunit SecY (430 aa).

10 consecutive transmembrane segments (helical) span residues I18–G38, F68–L88, F117–L137, V147–L167, F174–S194, I217–A237, V270–F290, N308–V328, F368–M388, and G389–I409.

The protein belongs to the SecY/SEC61-alpha family. Component of the Sec protein translocase complex. Heterotrimer consisting of SecY, SecE and SecG subunits. The heterotrimers can form oligomers, although 1 heterotrimer is thought to be able to translocate proteins. Interacts with the ribosome. Interacts with SecDF, and other proteins may be involved. Interacts with SecA.

It is found in the cell membrane. In terms of biological role, the central subunit of the protein translocation channel SecYEG. Consists of two halves formed by TMs 1-5 and 6-10. These two domains form a lateral gate at the front which open onto the bilayer between TMs 2 and 7, and are clamped together by SecE at the back. The channel is closed by both a pore ring composed of hydrophobic SecY resides and a short helix (helix 2A) on the extracellular side of the membrane which forms a plug. The plug probably moves laterally to allow the channel to open. The ring and the pore may move independently. This chain is Protein translocase subunit SecY, found in Staphylococcus epidermidis (strain ATCC 35984 / DSM 28319 / BCRC 17069 / CCUG 31568 / BM 3577 / RP62A).